The following is a 45-amino-acid chain: Phospholipase A2 3 (45 aa).

Ca(2+) is bound by residues Tyr20, Gly24, and Gly25. Cys21 and Cys36 are oxidised to a cystine. The active site involves His39. Asp40 contributes to the Ca(2+) binding site.

Ca(2+) serves as cofactor. Expressed by the venom gland.

The protein resides in the secreted. The catalysed reaction is a 1,2-diacyl-sn-glycero-3-phosphocholine + H2O = a 1-acyl-sn-glycero-3-phosphocholine + a fatty acid + H(+). PLA2 catalyzes the calcium-dependent hydrolysis of the 2-acyl groups in 3-sn-phosphoglycerides. This chain is Phospholipase A2 3, found in Bothrops diporus (Chaco lancehead).